The sequence spans 376 residues: DNA repair protein RAD51 homolog 3 (376 aa).

The required for Holliday junction resolution activity stretch occupies residues Met1–Ala126. Residue Ser20 is modified to Phosphoserine. An interaction with RAD51B, RAD51D and XRCC3 region spans residues Ser79–Met136. An ATP-binding site is contributed by Gly125–Thr132. A Nuclear localization signal motif is present at residues Arg366–Arg370.

The protein belongs to the RecA family. RAD51 subfamily. In terms of assembly, part of the RAD51 paralog protein complexes BCDX2 and CX3; the complexes have a ring-like structure arranged into a flat disc around a central channel. The BCDX2 complex consits of RAD51B, RAD51C, RAD51D and XRCC2; the CX3 complex consists of RAD51C and XRCC3. The BCDX2 subcomplex RAD51B:RAD51C interacts with RAD51. Interacts with SWSAP1; involved in homologous recombination repair. Interacts directly with PALB2 which may serve as a scaffold for a HR complex containing PALB2, BRCA2, RAD51C, RAD51 and XRCC3. Interacts with HELQ. Interacts with DNA damage up-regulated protein DDUP. In terms of tissue distribution, expressed in a variety of tissues, with highest expression in testis, heart muscle, spleen and prostate.

Its subcellular location is the nucleus. It is found in the cytoplasm. It localises to the perinuclear region. The protein resides in the mitochondrion. Essential for the homologous recombination (HR) pathway of DNA repair. Involved in the homologous recombination repair (HRR) pathway of double-stranded DNA breaks arising during DNA replication or induced by DNA-damaging agents. Part of the RAD51 paralog protein complexes BCDX2 and CX3 which act at different stages of the BRCA1-BRCA2-dependent HR pathway. Upon DNA damage, BCDX2 seems to act downstream of BRCA2 recruitment and upstream of RAD51 recruitment; CX3 seems to act downstream of RAD51 recruitment; both complexes bind predominantly to the intersection of the four duplex arms of the Holliday junction (HJ) and to junction of replication forks. The BCDX2 complex was originally reported to bind single-stranded DNA, single-stranded gaps in duplex DNA and specifically to nicks in duplex DNA. The BCDX2 subcomplex RAD51B:RAD51C exhibits single-stranded DNA-dependent ATPase activity suggesting an involvement in early stages of the HR pathway. Involved in RAD51 foci formation in response to DNA damage suggesting an involvement in early stages of HR probably in the invasion step. Has an early function in DNA repair in facilitating phosphorylation of the checkpoint kinase CHEK2 and thereby transduction of the damage signal, leading to cell cycle arrest and HR activation. Participates in branch migration and HJ resolution and thus is important for processing HR intermediates late in the DNA repair process; the function may be linked to the CX3 complex. Part of a PALB2-scaffolded HR complex containing BRCA2 and which is thought to play a role in DNA repair by HR. Protects RAD51 from ubiquitin-mediated degradation that is enhanced following DNA damage. Plays a role in regulating mitochondrial DNA copy number under conditions of oxidative stress in the presence of RAD51 and XRCC3. Contributes to DNA cross-link resistance, sister chromatid cohesion and genomic stability. Involved in maintaining centrosome number in mitosis. The chain is DNA repair protein RAD51 homolog 3 (RAD51C) from Homo sapiens (Human).